The primary structure comprises 161 residues: Endoribonuclease YbeY (161 aa).

Positions 127, 131, and 137 each coordinate Zn(2+).

It belongs to the endoribonuclease YbeY family. It depends on Zn(2+) as a cofactor.

The protein resides in the cytoplasm. Its function is as follows. Single strand-specific metallo-endoribonuclease involved in late-stage 70S ribosome quality control and in maturation of the 3' terminus of the 16S rRNA. This chain is Endoribonuclease YbeY, found in Listeria monocytogenes serotype 4b (strain CLIP80459).